The chain runs to 116 residues: uncharacterized protein (116 aa).

This is an uncharacterized protein from Aquifex aeolicus (strain VF5).